Consider the following 348-residue polypeptide: Mediator of RNA polymerase II transcription subunit 18 (348 aa).

Basic and acidic residues predominate over residues 152–218; that stretch reads MDVDLEHKDK…KNDEVKHSEV (67 aa). A disordered region spans residues 152–227; the sequence is MDVDLEHKDK…VNLEDGAETG (76 aa). Residues 167–223 adopt a coiled-coil conformation; sequence DTKEKEEDKKEEDKKEEDKKEEDKKEEDKKEEDKKEEEKVEKKNDEVKHSEVNLEDG.

The protein belongs to the Mediator complex subunit 18 family. In terms of assembly, component of the Mediator complex.

It is found in the nucleus. Component of the Mediator complex, a coactivator involved in the regulated transcription of nearly all RNA polymerase II-dependent genes. Mediator functions as a bridge to convey information from gene-specific regulatory proteins to the basal RNA polymerase II transcription machinery. Mediator is recruited to promoters by direct interactions with regulatory proteins and serves as a scaffold for the assembly of a functional preinitiation complex with RNA polymerase II and the general transcription factors. The polypeptide is Mediator of RNA polymerase II transcription subunit 18 (SRB5) (Scheffersomyces stipitis (strain ATCC 58785 / CBS 6054 / NBRC 10063 / NRRL Y-11545) (Yeast)).